Consider the following 190-residue polypeptide: Bifunctional protein PyrR (190 aa).

The PRPP-binding signature appears at Val-112–Ser-124.

It belongs to the purine/pyrimidine phosphoribosyltransferase family. PyrR subfamily.

The enzyme catalyses UMP + diphosphate = 5-phospho-alpha-D-ribose 1-diphosphate + uracil. In terms of biological role, regulates the transcription of the pyrimidine nucleotide (pyr) operon in response to exogenous pyrimidines. Its function is as follows. Also displays a weak uracil phosphoribosyltransferase activity which is not physiologically significant. The chain is Bifunctional protein PyrR from Mycolicibacterium paratuberculosis (strain ATCC BAA-968 / K-10) (Mycobacterium paratuberculosis).